The following is a 270-amino-acid chain: ATP synthase subunit a (270 aa).

The next 5 membrane-spanning stretches (helical) occupy residues 40–60 (IDSLFFSWFTGLIFLGIFYAV), 98–118 (IAPLALTIFCWVFLMNLMDLV), 143–163 (DVNITMAMALGVFALMIYYSI), 208–228 (LFGNMFAGEVVFILCAAMLPW), and 239–259 (AIFHILVILIQAFVFMMLTIV).

Belongs to the ATPase A chain family. In terms of assembly, F-type ATPases have 2 components, CF(1) - the catalytic core - and CF(0) - the membrane proton channel. CF(1) has five subunits: alpha(3), beta(3), gamma(1), delta(1), epsilon(1). CF(0) has three main subunits: a(1), b(2) and c(9-12). The alpha and beta chains form an alternating ring which encloses part of the gamma chain. CF(1) is attached to CF(0) by a central stalk formed by the gamma and epsilon chains, while a peripheral stalk is formed by the delta and b chains.

The protein resides in the cell inner membrane. Key component of the proton channel; it plays a direct role in the translocation of protons across the membrane. This is ATP synthase subunit a from Vibrio vulnificus (strain CMCP6).